Here is a 150-residue protein sequence, read N- to C-terminus: MPSILLINGPNLNLLGTREPHLYGSTTLPQLEDNAKALAASKGVKLESFQSNHEGQIVDRIHEARGHTDAIIINPGAFTHTSVAIRDALIGVSIPFIEVHITNVHAREEFRHHSYLSDKAAACIIGLGTYGYEAAIEYAVREIISAKYVY.

The Proton acceptor role is filled by tyrosine 23. Asparagine 74, histidine 80, and aspartate 87 together coordinate substrate. Catalysis depends on histidine 100, which acts as the Proton donor. Substrate is bound by residues 101–102 and arginine 111; that span reads IT.

This sequence belongs to the type-II 3-dehydroquinase family. As to quaternary structure, homododecamer. Adopts a ring-like structure, composed of an arrangement of two hexameric rings stacked on top of one another.

The catalysed reaction is 3-dehydroquinate = 3-dehydroshikimate + H2O. It functions in the pathway aromatic compound metabolism; 3,4-dihydroxybenzoate biosynthesis; 3,4-dihydroxybenzoate from 3-dehydroquinate: step 1/2. Is involved in the catabolism of quinate. Allows the utilization of quinate as carbon source via the beta-ketoadipate pathway. The polypeptide is Catabolic 3-dehydroquinase 2 (Neosartorya fischeri (strain ATCC 1020 / DSM 3700 / CBS 544.65 / FGSC A1164 / JCM 1740 / NRRL 181 / WB 181) (Aspergillus fischerianus)).